Consider the following 892-residue polypeptide: MVKNKFIIILVVVAVILPFISSLINFYTDWLFFVETGFTSVFTTTLAAKVGAGLFFGVLLFIFAMINLHFSNRAKFPQTNIFVEGRNIYQVKRDEAARLAKPLGILASAILAILACKWGAMQWQNVLLFTNMVTVGTNDPILGKDIGFYLFSLPLLEMLKIFAGFTVLATTVLVGAVYYVRGGITLMERGAAIDVKVRKHLAVLIGIFSLTVAAGFYLNGCGLLLSGSSTFHGAGYADVNARLLTLRILTVLTPLAGAILAAGLWQGAWRLALLPPILVIAVYGIGIKAYPALLEKFKVAPNQLALETPYIENTIRFTRLGYDLDKIETIPFDADVKLTAADIANNDATIKNIRLWDHAPLLKTYSQLQQIRTYYKFFDVDNDRYLVNGQYTQVMLSPRELSYDDLPSRNWINERLIFTHGNGITFGPVSRISKEGLPEFFVKDIPAVSLADIKVTRPEIYYGELSNEYVIVKTKVPEFSYPTATGNINTTYGGKGGVPVGSMLNKALFAARFRTEKILLSSDIGSESRILYYRNINERVRAVAPFLRFDGDPYMVVADNGGLKWIIDAYTYSSRLPYSKPLKGGINYMRNSVKAVVDAYDGSLTFYISDPDDVMVKVYGRIFPELFKPMAAMPDDLRKHIRYPHQFLQLQAAMFAAYHMTDPKVFYNKENLWEIPSLGDKPMEPYYTIMKLPGEKKEEYLLLLPFTPSKRDNLAAWLTARCDAPNYGKILAYTFPRDRLIYGPKQIDARINQDSFISQQLTLWNQRGSEVIRGSMLVIPIEKSLLYVQPLFLAAADKAGLPELRRVIVAYGDEVVMEETLELALQRIFGGRKAPAGSTQPTPAAMKASSAELAREAMSIFERATNLQRQGDWAGYGEELKKLQQVLRRMAQ.

The next 7 helical transmembrane spans lie at 6 to 26 (FIII…LINF), 50 to 70 (VGAG…NLHF), 103 to 123 (LGIL…AMQW), 158 to 178 (MLKI…GAVY), 201 to 221 (LAVL…LNGC), 248 to 268 (ILTV…WQGA), and 271 to 291 (LALL…KAYP).

It belongs to the UPF0182 family.

It localises to the cell membrane. This chain is UPF0182 protein Gura_0902, found in Geotalea uraniireducens (strain Rf4) (Geobacter uraniireducens).